The chain runs to 496 residues: MSIKLEISFSKSAKLNGGLAILLKTAEADSAAGAETVDPAGVIVKAARIARYSAKSMNGLDIVVPEGAPVDRIVVIGLGKAAELTAHDWLKAGGAAASRIKNTDKAAVFIDVPGLTTSPRAAADFALGMLLRAYSFDTYKTKKGDEEEKPAKSVKVTIVTADPAGAKKAFSDSEAIAGGVNLARDLVNEPPNVLGPVEFAAKAKELEKLGVEVEILTEREMRRLGMGALLGVAQGSVRPPRLAVMQWKGGKGKDRPVAFIGKGVVFDTGGISIKPAAGMEDMKGDMGGAAAVTGLMHVLASRKAAVNAVGIIGLVENMPDGNAQRPGDIVTSMSGQTIEVINTDAEGRLVLCDALWYCNDRFKPQFMINLATLTGAIIVALGNVHAGLFSNDDQLSAQLTAAGLSSNEKLWRMPLGRDYDKLIDSKFADMKNTGGRQAGSITAAHFLKRFVQDTPWAHLDIAGTAMGSPQDEINQSWGSGFGVRLLDELVRAHYES.

2 residues coordinate Mn(2+): lysine 262 and aspartate 267. Lysine 274 is a catalytic residue. Residues aspartate 285, aspartate 344, and glutamate 346 each coordinate Mn(2+). Residue arginine 348 is part of the active site.

Belongs to the peptidase M17 family. Mn(2+) serves as cofactor.

The protein resides in the cytoplasm. It catalyses the reaction Release of an N-terminal amino acid, Xaa-|-Yaa-, in which Xaa is preferably Leu, but may be other amino acids including Pro although not Arg or Lys, and Yaa may be Pro. Amino acid amides and methyl esters are also readily hydrolyzed, but rates on arylamides are exceedingly low.. The enzyme catalyses Release of an N-terminal amino acid, preferentially leucine, but not glutamic or aspartic acids.. In terms of biological role, presumably involved in the processing and regular turnover of intracellular proteins. Catalyzes the removal of unsubstituted N-terminal amino acids from various peptides. In Rhizobium johnstonii (strain DSM 114642 / LMG 32736 / 3841) (Rhizobium leguminosarum bv. viciae), this protein is Probable cytosol aminopeptidase.